We begin with the raw amino-acid sequence, 226 residues long: UPF0758 protein M28_Spy0816 (226 aa).

Positions 103-225 constitute an MPN domain; it reads SVLTSVQVAE…YYSFREKSTL (123 aa). His-174, His-176, and Asp-187 together coordinate Zn(2+). Residues 174–187 carry the JAMM motif motif; sequence HNHPSGNIEPSSND.

It belongs to the UPF0758 family.

This chain is UPF0758 protein M28_Spy0816, found in Streptococcus pyogenes serotype M28 (strain MGAS6180).